Reading from the N-terminus, the 531-residue chain is T-complex protein 1 subunit zeta (531 aa).

The residue at position 2 (Ala-2) is an N-acetylalanine. Lys-5 carries the post-translational modification N6-acetyllysine. Gly-39 contributes to the ADP binding site. Gly-39 contacts ATP. Position 90 (Asp-90) interacts with Mg(2+). Positions 91, 92, 93, 94, 158, and 159 each coordinate ADP. ATP contacts are provided by Gly-91, Thr-92, and Thr-93. Lys-199 bears the N6-acetyllysine mark. Phosphoserine is present on Ser-205. Residue Lys-251 forms a Glycyl lysine isopeptide (Lys-Gly) (interchain with G-Cter in SUMO2) linkage. 4 positions are modified to N6-acetyllysine: Lys-287, Lys-365, Lys-377, and Lys-388. Position 411 (Ala-411) interacts with ADP. The ATP site is built by Ala-411, Gly-412, Asp-496, and Lys-501. ADP is bound at residue Asp-496.

Belongs to the TCP-1 chaperonin family. Component of the chaperonin-containing T-complex (TRiC), a hexadecamer composed of two identical back-to-back stacked rings enclosing a protein folding chamber. Each ring is made up of eight different subunits: TCP1/CCT1, CCT2, CCT3, CCT4, CCT5, CCT6A/CCT6, CCT7, CCT8. Interacts with PACRG.

It is found in the cytoplasm. The catalysed reaction is ATP + H2O = ADP + phosphate + H(+). Its function is as follows. Component of the chaperonin-containing T-complex (TRiC), a molecular chaperone complex that assists the folding of actin, tubulin and other proteins upon ATP hydrolysis. The TRiC complex mediates the folding of WRAP53/TCAB1, thereby regulating telomere maintenance. The protein is T-complex protein 1 subunit zeta (CCT6A) of Homo sapiens (Human).